The chain runs to 92 residues: MKFFMVFAVTFCLALSFVSQSLALPADDEAHFVDGLEALKTIEPELHGRYKRATCDLLSGTGVKHSACAAHCLLRGNRGGYCNGRAICVCRN.

The first 23 residues, 1–23 (MKFFMVFAVTFCLALSFVSQSLA), serve as a signal peptide directing secretion. The propeptide occupies 24–52 (LPADDEAHFVDGLEALKTIEPELHGRYKR). 3 disulfides stabilise this stretch: Cys-55-Cys-82, Cys-68-Cys-88, and Cys-72-Cys-90.

It belongs to the invertebrate defensin family. Type 1 subfamily. The disulfide bonds are essential for antimicrobial activity. Larval fat body, hemolymph and salivary glands (at protein level). Expressed in the salivary glands of all larval stages.

Its subcellular location is the secreted. It localises to the host cell membrane. Its function is as follows. Shows strong antibacterial activity against numerous Gram-positive bacteria. It selectively inhibits peptidoglycan biosynthesis through complex formation with the cell wall precursor lipid II (1:1 molar ratio) thus inhibiting cell wall synthesis. Shows antibacterial activity against the Gram-positive bacteria M.luteus, E.fecalis (MIC=32 mg/L), S.aureus (MIC=16 mg/L), S.carnosus (MIC=2 mg/L), S.pneumoniae (MIC=2 mg/L) and S.pyogenes (MIC=2 mg/L) and against a number of methicillin-resistant S.aureus and glycopeptide-intermediate S.aureus isolates. Does not show antibacterial activity against Gram-negative bacteria or antifungal activity against C.utilis. Shows slight antifungal activity against C.albicans. The chain is Defensin Lucifensin from Lucilia sericata (Green bottle fly).